Reading from the N-terminus, the 175-residue chain is MLQTWAKLAYEANLGIVYGSTLIILLLPLIGSFMPPNLVSSISKLNAFTLLESYLLPVLSNFGIFGGLALGVGSAIAFSVLNSIASSFLNLSFNQQQALTIVVALLVSQFIFGGWATFALFLTSMLGSVPPVPGLAVIMSFITPFIDGLIATLGGLMVVLSILYELSEIGLVTLP.

4 helical membrane passes run 14–34 (LGIV…GSFM), 58–78 (VLSN…AIAF), 101–121 (IVVA…FALF), and 142–162 (ITPF…VLSI).

Its subcellular location is the host membrane. In Acidianus two-tailed virus (ATV), this protein is Putative transmembrane protein ORF175.